A 152-amino-acid chain; its full sequence is Large ribosomal subunit protein bL9 (152 aa).

Belongs to the bacterial ribosomal protein bL9 family.

Functionally, binds to the 23S rRNA. This is Large ribosomal subunit protein bL9 from Synechococcus elongatus (strain ATCC 33912 / PCC 7942 / FACHB-805) (Anacystis nidulans R2).